A 943-amino-acid chain; its full sequence is 2-oxoglutarate dehydrogenase E1 component (943 aa).

Belongs to the alpha-ketoglutarate dehydrogenase family. As to quaternary structure, homodimer. Part of the 2-oxoglutarate dehydrogenase (OGDH) complex composed of E1 (2-oxoglutarate dehydrogenase), E2 (dihydrolipoamide succinyltransferase) and E3 (dihydrolipoamide dehydrogenase); the complex contains multiple copies of the three enzymatic components (E1, E2 and E3). Requires thiamine diphosphate as cofactor.

It carries out the reaction N(6)-[(R)-lipoyl]-L-lysyl-[protein] + 2-oxoglutarate + H(+) = N(6)-[(R)-S(8)-succinyldihydrolipoyl]-L-lysyl-[protein] + CO2. Its function is as follows. E1 component of the 2-oxoglutarate dehydrogenase (OGDH) complex which catalyzes the decarboxylation of 2-oxoglutarate, the first step in the conversion of 2-oxoglutarate to succinyl-CoA and CO(2). In Shouchella clausii (strain KSM-K16) (Alkalihalobacillus clausii), this protein is 2-oxoglutarate dehydrogenase E1 component.